A 736-amino-acid chain; its full sequence is DNA topoisomerase 1 (736 aa).

The region spanning 2–113 is the Toprim domain; the sequence is KHLIIVESPA…SYPRIVFHEI (112 aa). Residues Glu8 and Asp82 each coordinate Mg(2+). Positions 129–552 constitute a Topo IA-type catalytic domain; it reads DMSKVNAQQA…DFYYPFMDKI (424 aa). Positions 163–168 are interaction with DNA; the sequence is SAGRVQ. Residue Tyr297 is the O-(5'-phospho-DNA)-tyrosine intermediate of the active site. 4 C4-type zinc fingers span residues 572–598, 616–642, 663–689, and 702–725; these read CPKC…YPKC, CEKC…YPEC, CPEC…YPKC, and CEKC…CIKC.

The protein belongs to the type IA topoisomerase family. Monomer. The cofactor is Mg(2+).

The enzyme catalyses ATP-independent breakage of single-stranded DNA, followed by passage and rejoining.. In terms of biological role, releases the supercoiling and torsional tension of DNA, which is introduced during the DNA replication and transcription, by transiently cleaving and rejoining one strand of the DNA duplex. Introduces a single-strand break via transesterification at a target site in duplex DNA. The scissile phosphodiester is attacked by the catalytic tyrosine of the enzyme, resulting in the formation of a DNA-(5'-phosphotyrosyl)-enzyme intermediate and the expulsion of a 3'-OH DNA strand. The free DNA strand then undergoes passage around the unbroken strand, thus removing DNA supercoils. Finally, in the religation step, the DNA 3'-OH attacks the covalent intermediate to expel the active-site tyrosine and restore the DNA phosphodiester backbone. In Helicobacter pylori (strain ATCC 700392 / 26695) (Campylobacter pylori), this protein is DNA topoisomerase 1.